Reading from the N-terminus, the 715-residue chain is Fatty acid oxidation complex subunit alpha (715 aa).

The segment at 1 to 190 is enoyl-CoA hydratase; the sequence is MTTTSAFMLN…KAGLVDDVVP (190 aa). Residues 306–714 form a 3-hydroxyacyl-CoA dehydrogenase region; sequence GPLNSVGILG…FWTNGETDQG (409 aa).

This sequence in the N-terminal section; belongs to the enoyl-CoA hydratase/isomerase family. In the central section; belongs to the 3-hydroxyacyl-CoA dehydrogenase family. As to quaternary structure, heterotetramer of two alpha chains (FadJ) and two beta chains (FadI).

Its subcellular location is the cytoplasm. The enzyme catalyses a (3S)-3-hydroxyacyl-CoA = a (2E)-enoyl-CoA + H2O. The catalysed reaction is a 4-saturated-(3S)-3-hydroxyacyl-CoA = a (3E)-enoyl-CoA + H2O. It catalyses the reaction a (3S)-3-hydroxyacyl-CoA + NAD(+) = a 3-oxoacyl-CoA + NADH + H(+). It carries out the reaction (3S)-3-hydroxybutanoyl-CoA = (3R)-3-hydroxybutanoyl-CoA. The protein operates within lipid metabolism; fatty acid beta-oxidation. Catalyzes the formation of a hydroxyacyl-CoA by addition of water on enoyl-CoA. Also exhibits 3-hydroxyacyl-CoA epimerase and 3-hydroxyacyl-CoA dehydrogenase activities. The polypeptide is Fatty acid oxidation complex subunit alpha (Salmonella choleraesuis (strain SC-B67)).